Reading from the N-terminus, the 269-residue chain is UPF0162 protein BU173 (269 aa).

The protein belongs to the UPF0162 family.

This Buchnera aphidicola subsp. Acyrthosiphon pisum (strain APS) (Acyrthosiphon pisum symbiotic bacterium) protein is UPF0162 protein BU173.